Reading from the N-terminus, the 326-residue chain is Vacuolar protein sorting-associated protein 26A-A (326 aa).

A disordered region spans residues 306–326 (TNFHQRFEPQEPQASAEEPEI). Over residues 315–326 (QEPQASAEEPEI) the composition is skewed to low complexity.

This sequence belongs to the VPS26 family. In terms of assembly, component of the heterotrimeric retromer cargo-selective complex (CSC) which is believed to associate with variable sorting nexins to form functionally distinct retromer complex variants.

It is found in the cytoplasm. It localises to the endosome membrane. The protein localises to the early endosome. In terms of biological role, acts as a component of the retromer cargo-selective complex (CSC). The CSC is believed to be the core functional component of retromer or respective retromer complex variants acting to prevent missorting of selected transmembrane cargo proteins into the lysosomal degradation pathway. Retromer mediates retrograde transport of cargo proteins from endosomes to the trans-Golgi network (TGN). This is Vacuolar protein sorting-associated protein 26A-A (vps26a-a) from Xenopus laevis (African clawed frog).